Consider the following 314-residue polypeptide: MSTDLAQSWLTLSAPVAAARAAGRPLVALESTIIAHGMPYPENVRTAHEVEALILELGAEPATIALIDGRIRVGLSDDELERLGRSGKAHKVSRRDLPAVLTSGELGATTVAGTMICAALAGIEVFVTGGIGGVHRGAQETFDISADLQELARTSVAVVCAGAKSILDIGLTLEYLETQGVPVLTCEQENFAAFYKRDSGFRADYRLDDPAEQARFIRTKWDLGLAGGVLLSTPVPEAAAMASEEIDALTQQALDEAQAQGITGKAVTPFLLARIKALTGGRSLATNIALVKHNAEVGARLALALAQAARGAVA.

E30 serves as the catalytic Proton donor. Substrate is bound by residues K91 and V111. Mn(2+) is bound at residue D143. Substrate is bound at residue 145–147 (SAD). K164 (nucleophile) is an active-site residue.

Belongs to the pseudouridine-5'-phosphate glycosidase family. Homotrimer. The cofactor is Mn(2+).

The catalysed reaction is D-ribose 5-phosphate + uracil = psi-UMP + H2O. Catalyzes the reversible cleavage of pseudouridine 5'-phosphate (PsiMP) to ribose 5-phosphate and uracil. Functions biologically in the cleavage direction, as part of a pseudouridine degradation pathway. The chain is Pseudouridine-5'-phosphate glycosidase from Cupriavidus pinatubonensis (strain JMP 134 / LMG 1197) (Cupriavidus necator (strain JMP 134)).